Here is a 213-residue protein sequence, read N- to C-terminus: Transcriptional regulatory protein YdfI (213 aa).

Positions 3–118 (KVLIVDDHLV…TLFHTMDAAI (116 aa)) constitute a Response regulatory domain. At Asp-54 the chain carries 4-aspartylphosphate. In terms of domain architecture, HTH luxR-type spans 142 to 207 (KQRNETQLTE…EAVTIAMQKG (66 aa)). Residues 166-185 (SKAIAFDLGVSERTVKSRLT) constitute a DNA-binding region (H-T-H motif).

Phosphorylated by YdfH.

The protein resides in the cytoplasm. Its function is as follows. Member of the two-component regulatory system YdfH/YdfI. Regulates the transcription of ydfJ by binding to its promoter region. The protein is Transcriptional regulatory protein YdfI (ydfI) of Bacillus subtilis (strain 168).